A 482-amino-acid chain; its full sequence is Malvidin galactosylase UGT88C3 (482 aa).

The active-site Proton acceptor is histidine 16. Residue aspartate 117 is the Charge relay of the active site. 7 residues coordinate UDP: serine 279, tryptophan 345, alanine 349, histidine 366, asparagine 370, serine 371, and glutamate 374.

It belongs to the UDP-glycosyltransferase family. In terms of tissue distribution, highly expressed in leaves, sheaths, pistils and embryos, observed in stems, stem nodes and panicles, and present at low levels in roots.

It is found in the endoplasmic reticulum. Its subcellular location is the nucleus. It carries out the reaction malvidin + UDP-alpha-D-galactose = malvidin 3-O-beta-D-galactoside + UDP + H(+). It functions in the pathway pigment biosynthesis; anthocyanin biosynthesis. Functionally, UDP-glycosyltransferase which uses UDP-galactose and malvidin as substrates to catalyze the biosynthesis of malvidin 3-O-galactoside, an anthocyanin conferring purple pigmentation. The protein is Malvidin galactosylase UGT88C3 of Oryza sativa subsp. japonica (Rice).